The sequence spans 696 residues: DNA ligase (696 aa).

NAD(+) contacts are provided by residues Asp36–Asp40, Ser85–Leu86, and Glu123. Lys125 acts as the N6-AMP-lysine intermediate in catalysis. The NAD(+) site is built by Arg146, Glu181, Lys319, and Lys343. 4 residues coordinate Zn(2+): Cys437, Cys440, Cys455, and Cys461. The BRCT domain occupies Pro618–Leu696.

This sequence belongs to the NAD-dependent DNA ligase family. LigA subfamily. Mg(2+) serves as cofactor. It depends on Mn(2+) as a cofactor.

It catalyses the reaction NAD(+) + (deoxyribonucleotide)n-3'-hydroxyl + 5'-phospho-(deoxyribonucleotide)m = (deoxyribonucleotide)n+m + AMP + beta-nicotinamide D-nucleotide.. In terms of biological role, DNA ligase that catalyzes the formation of phosphodiester linkages between 5'-phosphoryl and 3'-hydroxyl groups in double-stranded DNA using NAD as a coenzyme and as the energy source for the reaction. It is essential for DNA replication and repair of damaged DNA. This Bordetella pertussis (strain Tohama I / ATCC BAA-589 / NCTC 13251) protein is DNA ligase.